The chain runs to 458 residues: Chromosomal replication initiator protein DnaA (458 aa).

The segment at 1 to 84 (MENIWLEAQT…FHVAEEKPEA (84 aa)) is domain I, interacts with DnaA modulators. Residues 80-119 (EKPEAAHEAKPEKEAKPAREKERDKDKEKEKDREKEKKEL) are compositionally biased toward basic and acidic residues. The segment at 80-120 (EKPEAAHEAKPEKEAKPAREKERDKDKEKEKDREKEKKELV) is disordered. The tract at residues 84–121 (AAHEAKPEKEAKPAREKERDKDKEKEKDREKEKKELVP) is domain II. The segment at 122–338 (NLNPKYTFES…GMLIRLEAFA (217 aa)) is domain III, AAA+ region. Residues glycine 166, glycine 168, lysine 169, and threonine 170 each coordinate ATP. Residues 339–458 (SLTGQEITLS…VEDIRKKLFT (120 aa)) are domain IV, binds dsDNA.

It belongs to the DnaA family. As to quaternary structure, oligomerizes as a right-handed, spiral filament on DNA at oriC.

Its subcellular location is the cytoplasm. In terms of biological role, plays an essential role in the initiation and regulation of chromosomal replication. ATP-DnaA binds to the origin of replication (oriC) to initiate formation of the DNA replication initiation complex once per cell cycle. Binds the DnaA box (a 9 base pair repeat at the origin) and separates the double-stranded (ds)DNA. Forms a right-handed helical filament on oriC DNA; dsDNA binds to the exterior of the filament while single-stranded (ss)DNA is stabiized in the filament's interior. The ATP-DnaA-oriC complex binds and stabilizes one strand of the AT-rich DNA unwinding element (DUE), permitting loading of DNA polymerase. After initiation quickly degrades to an ADP-DnaA complex that is not apt for DNA replication. Binds acidic phospholipids. This is Chromosomal replication initiator protein DnaA from Citrifermentans bemidjiense (strain ATCC BAA-1014 / DSM 16622 / JCM 12645 / Bem) (Geobacter bemidjiensis).